Here is a 366-residue protein sequence, read N- to C-terminus: Probable trehalose-phosphate phosphatase 3 (366 aa).

The protein belongs to the trehalose phosphatase family. It depends on a divalent metal cation as a cofactor.

It catalyses the reaction alpha,alpha-trehalose 6-phosphate + H2O = alpha,alpha-trehalose + phosphate. The protein operates within glycan biosynthesis; trehalose biosynthesis. Its function is as follows. Removes the phosphate from trehalose 6-phosphate to produce free trehalose. Trehalose accumulation in plant may improve abiotic stress tolerance. The chain is Probable trehalose-phosphate phosphatase 3 (TPP3) from Oryza sativa subsp. japonica (Rice).